A 1213-amino-acid chain; its full sequence is Probable ATP-binding protein BrxC (1213 aa).

Belongs to the BrxC family.

Its function is as follows. BREX systems (bacteriophage exclusion) provide immunity against bacteriophage. Part of a type 1 BREX system which protects against dsDNA phage. This system allows phage adsorption but prevents phage DNA replication, without degradation of the phage DNA. Methylation of bacterial DNA by PglX guides self/non-self discrimination. When the brxA-brxB-brxC-pglX-pglZ-brxL genes are transformed into a susceptible E.coli strain (BW25113) they confer very high resistance to infection by bacteriophage VR7 and VpaE1, about 100-fold protection against lambda, T5 and T7 and no protection against RNA phage Qbeta, ssDNA phage M13 or dSDNA phage T4 and VR5. Glycosylated phage DNA is not susceptible to BREX. The BREX system does not confer resistance to lysogenic lambda phage, i.e. prophage that are integrated into the chromosomal DNA and then induced to form phage. In Escherichia coli O9:H4 (strain HS), this protein is Probable ATP-binding protein BrxC.